We begin with the raw amino-acid sequence, 260 residues long: Voltage-dependent calcium channel gamma-6 subunit (260 aa).

4 helical membrane-spanning segments follow: residues leucine 43–valine 63, valine 143–leucine 163, serine 169–leucine 189, and leucine 221–leucine 241.

Belongs to the PMP-22/EMP/MP20 family. CACNG subfamily. As to quaternary structure, interacts with CACNA1C. Identified in a complex with the L-type calcium channel subunits CACNA1C, CACNA2D1 and either CACNB1 or CACNB2. In terms of tissue distribution, detected in brain and heart (at protein level).

It is found in the cell membrane. Regulates the activity of L-type calcium channels that contain CACNA1C as pore-forming subunit. The sequence is that of Voltage-dependent calcium channel gamma-6 subunit (Cacng6) from Mus musculus (Mouse).